The sequence spans 151 residues: UPF0208 membrane protein Ent638_2839 (151 aa).

Helical transmembrane passes span 46-65 (YAIR…QIAL) and 69-91 (LGPA…WWLG).

It belongs to the UPF0208 family.

The protein resides in the cell inner membrane. The polypeptide is UPF0208 membrane protein Ent638_2839 (Enterobacter sp. (strain 638)).